Consider the following 314-residue polypeptide: D-alanine--D-alanine ligase (314 aa).

The ATP-grasp domain occupies 114–309; sequence KQLWRAHGLP…FDALVLRILD (196 aa). An ATP-binding site is contributed by 140–195; sequence IEALGLPLIVKPVHEGSTIGISIVETRDALIAAHAEASRFDSAIMAERFVQGEEYT. Mg(2+) is bound by residues Asp263, Glu276, and Asn278.

The protein belongs to the D-alanine--D-alanine ligase family. Mg(2+) serves as cofactor. Mn(2+) is required as a cofactor.

It localises to the cytoplasm. It catalyses the reaction 2 D-alanine + ATP = D-alanyl-D-alanine + ADP + phosphate + H(+). It functions in the pathway cell wall biogenesis; peptidoglycan biosynthesis. In terms of biological role, cell wall formation. This is D-alanine--D-alanine ligase from Chromohalobacter salexigens (strain ATCC BAA-138 / DSM 3043 / CIP 106854 / NCIMB 13768 / 1H11).